Reading from the N-terminus, the 95-residue chain is GIPCGESCVFIPCISTVIGCSCKNKVCYRNHVIAAEAKTMDDHHLLCQSHEDCITKGTGNFCAPFPDQDIKYGWCFRAESEGFMLKDHLKMSITN.

Positions 1-30 (GIPCGESCVFIPCISTVIGCSCKNKVCYRN) form a cross-link, cyclopeptide (Gly-Asn). Disulfide bonds link Cys4/Cys20, Cys8/Cys22, and Cys13/Cys27. Positions 31–95 (HVIAAEAKTM…KDHLKMSITN (65 aa)) are cleaved as a propeptide — removed in mature form.

In terms of processing, contains 3 disulfide bonds. This is a cyclic peptide. Expressed in stem, shoot, root, leaf, pod and nodule but not in flower and seed (at protein level).

Probably participates in a plant defense mechanism. The chain is Cliotide T5 from Clitoria ternatea (Butterfly pea).